A 328-amino-acid chain; its full sequence is Carbonic anhydrase-related protein 10 (328 aa).

The Alpha-carbonic anhydrase domain occupies 31–301 (GWWAYKEVVQ…LNNRCIRTNI (271 aa)).

The protein belongs to the alpha-carbonic anhydrase family.

Its function is as follows. Does not have a catalytic activity. The polypeptide is Carbonic anhydrase-related protein 10 (CA10) (Bos taurus (Bovine)).